Here is a 409-residue protein sequence, read N- to C-terminus: Tyrosine--tRNA ligase (409 aa).

The 'HIGH' region signature appears at 54–63; the sequence is PTAPDIHLGH. Positions 238-242 match the 'KMSKS' region motif; that stretch reads KMSKS. Position 241 (Lys241) interacts with ATP. An S4 RNA-binding domain is found at 347 to 407; sequence QGILRILREA…GKRKFARVKL (61 aa).

The protein belongs to the class-I aminoacyl-tRNA synthetase family. TyrS type 2 subfamily. In terms of assembly, homodimer.

Its subcellular location is the cytoplasm. It carries out the reaction tRNA(Tyr) + L-tyrosine + ATP = L-tyrosyl-tRNA(Tyr) + AMP + diphosphate + H(+). In terms of biological role, catalyzes the attachment of tyrosine to tRNA(Tyr) in a two-step reaction: tyrosine is first activated by ATP to form Tyr-AMP and then transferred to the acceptor end of tRNA(Tyr). This is Tyrosine--tRNA ligase from Bordetella pertussis (strain Tohama I / ATCC BAA-589 / NCTC 13251).